Consider the following 483-residue polypeptide: Probable cobyric acid synthase (483 aa).

Residues 247–433 enclose the GATase cobBQ-type domain; it reads ELHIQIIKLP…LHGIFHNFAF (187 aa). The active-site Nucleophile is Cys325. His425 is a catalytic residue.

Belongs to the CobB/CobQ family. CobQ subfamily.

Its pathway is cofactor biosynthesis; adenosylcobalamin biosynthesis. Catalyzes amidations at positions B, D, E, and G on adenosylcobyrinic A,C-diamide. NH(2) groups are provided by glutamine, and one molecule of ATP is hydrogenolyzed for each amidation. This Thermococcus gammatolerans (strain DSM 15229 / JCM 11827 / EJ3) protein is Probable cobyric acid synthase.